The following is a 6306-amino-acid chain: Adhesion G-protein coupled receptor V1 (6306 aa).

A signal peptide spans 1-29 (MSVFLGPGMPSASLLVNLLSALLILFVFG). Calx-beta domains lie at 30–117 (ETEI…FHLT), 133–237 (VTVT…IQLK), 262–362 (PVRF…HIML), 388–488 (KPYG…LQIL), 645–745 (PAIA…TLSL), 763–861 (DLII…VVLS), 876–979 (VNIT…VILL), 993–1093 (ATLR…IILL), 1108–1208 (TVII…LKLV), 1444–1544 (AMPR…FILK), 1564–1665 (TIQK…RVTL), 1710–1809 (TGLP…VELL), 1850–1952 (ILVT…VSVL), 1966–2079 (TLTV…IELL), 2107–2206 (QLII…VQLM), 2222–2324 (VIII…VQLT), 2441–2541 (TLCL…FLIS), 2584–2676 (NISP…VSLV), 2689–2789 (DTVR…QVIL), 2814–2925 (LTVE…VNLT), 2947–3048 (TAQV…LILT), and 3063–3172 (LIIV…CTLF). Residues 30-5908 (ETEIRFTGQT…TDNLSSYNEA (5879 aa)) lie on the Extracellular side of the membrane. 6 EAR repeats span residues 3255-3296 (VFSV…RWQG), 3297-3345 (IFIP…TFTS), 3348-3393 (KLFL…RWNG), 3395-3439 (SFVL…RWSG), 3441-3488 (GFIN…IWEM), and 3492-3534 (SFRY…CWNS). 13 Calx-beta domains span residues 3525-3625 (DMSA…KVQL), 3639-3739 (SVTI…IVTL), 3775-3875 (GLVG…VTIT), 3899-4006 (AEIM…ISLI), 4020-4123 (VTVV…IQLI), 4139-4239 (IIIR…EFQL), 4255-4354 (ANIT…LTIT), 4387-4489 (RIII…ILLT), 4512-4612 (SPFG…IIKL), 4634-4734 (EFGD…VIQL), 4992-5095 (SGFI…INLT), 5288-5332 (AVEE…YVFL), and 5368-5468 (IGFS…FVEL). Positions 5747-5903 (SILALHWYPQ…AVYARTDNLS (157 aa)) constitute a GAIN-B domain. 2 cysteine pairs are disulfide-bonded: cysteine 5856-cysteine 5885 and cysteine 5873-cysteine 5887. The GPS stretch occupies residues 5856 to 5903 (CLLWNQAAASWLSDSQFCKVVEETADYVECACSHMSVYAVYARTDNLS). Residues 5909–5929 (FFTSGFICISGLCLAVLSHIF) traverse the membrane as a helical segment. Over 5930–5939 (CARYSMFAAK) the chain is Cytoplasmic. Residues 5940–5960 (LLTHMMAASLGTQILFLASAY) traverse the membrane as a helical segment. The Extracellular segment spans residues 5961–5979 (ASPQLAEESCSAMAAVTHY). The chain crosses the membrane as a helical span at residues 5980–6000 (LYLCQFSWMLIQSVNFWYVLV). Residues 6001 to 6010 (MNDEHTERRY) lie on the Cytoplasmic side of the membrane. The helical transmembrane segment at 6011-6031 (LLFFLLSWGLPAFVVILLIVI) threads the bilayer. The Extracellular segment spans residues 6032 to 6059 (LKGIYHQSMSQIYGLIHGDLCFIPNVYA). Residues 6060 to 6080 (ALFTAALVPLTCLVVVFVVFI) form a helical membrane-spanning segment. The Cytoplasmic portion of the chain corresponds to 6081–6104 (HAYQVKPQWKAYDDVFRGRTNAAE). Residues 6105–6125 (IPLILYLFALISVTWLWGGLH) form a helical membrane-spanning segment. Residues 6126–6133 (MAYRHFWM) lie on the Extracellular side of the membrane. Residues 6134 to 6154 (LVLFVIFNSLQGLYVFMVYFI) form a helical membrane-spanning segment. The Cytoplasmic portion of the chain corresponds to 6155 to 6306 (LHNQMCCPMK…RRIPIADTHL (152 aa)). Residues 6216–6248 (ASFQQGSQASPDLKPSPQNGATFPSSGGYGQGS) are disordered. Over residues 6217 to 6240 (SFQQGSQASPDLKPSPQNGATFPS) the composition is skewed to polar residues.

Belongs to the G-protein coupled receptor 2 family. Adhesion G-protein coupled receptor (ADGR) subfamily. In terms of assembly, forms a heterodimer, consisting of a large extracellular region (alpha subunit) non-covalently linked to a seven-transmembrane moiety (beta subunit). Component of USH2 complex, composed of ADGRV1, PDZD7, USH2A and WHRN. Interacts with USH2A and WHRN. Interacts (via the cytoplasmic region) with PDZD7. Interacts (via the cytoplasmic region) with MYO7A (via MyTH4-FERM domains). In terms of processing, autoproteolytically cleaved into 2 subunits, an extracellular alpha subunit and a seven-transmembrane subunit. As to expression, expressed at low levels in adult tissues.

It is found in the cell membrane. It localises to the cell projection. The protein resides in the stereocilium membrane. The protein localises to the photoreceptor inner segment. G-protein coupled receptor which has an essential role in the development of hearing and vision. Couples to G-alpha(i)-proteins, GNAI1/2/3, G-alpha(q)-proteins, GNAQ, as well as G-alpha(s)-proteins, GNAS, inhibiting adenylate cyclase (AC) activity and cAMP production. Required for the hair bundle ankle formation, which connects growing stereocilia in developing cochlear hair cells of the inner ear. In response to extracellular calcium, activates kinases PKA and PKC to regulate myelination by inhibiting the ubiquitination of MAG, thus enhancing the stability of this protein in myelin-forming cells of the auditory pathway. In retina photoreceptors, the USH2 complex is required for the maintenance of periciliary membrane complex that seems to play a role in regulating intracellular protein transport. Involved in the regulation of bone metabolism. In terms of biological role, cleaved ADGRV1 beta-subunit couples with G-alpha(i)-proteins, GNAI1/2/3, and constitutively inhibits adenylate cyclase (AC) activity with a stronger effect than full ADGRV1. The polypeptide is Adhesion G-protein coupled receptor V1 (Homo sapiens (Human)).